Consider the following 175-residue polypeptide: 3-hydroxydecanoyl-[acyl-carrier-protein] dehydratase (175 aa).

H71 is a catalytic residue.

Belongs to the thioester dehydratase family. FabA subfamily. In terms of assembly, homodimer.

It localises to the cytoplasm. It catalyses the reaction a (3R)-hydroxyacyl-[ACP] = a (2E)-enoyl-[ACP] + H2O. The catalysed reaction is (3R)-hydroxydecanoyl-[ACP] = (2E)-decenoyl-[ACP] + H2O. It carries out the reaction (2E)-decenoyl-[ACP] = (3Z)-decenoyl-[ACP]. It functions in the pathway lipid metabolism; fatty acid biosynthesis. In terms of biological role, necessary for the introduction of cis unsaturation into fatty acids. Catalyzes the dehydration of (3R)-3-hydroxydecanoyl-ACP to E-(2)-decenoyl-ACP and then its isomerization to Z-(3)-decenoyl-ACP. Can catalyze the dehydratase reaction for beta-hydroxyacyl-ACPs with saturated chain lengths up to 16:0, being most active on intermediate chain length. In Rhodopseudomonas palustris (strain ATCC BAA-98 / CGA009), this protein is 3-hydroxydecanoyl-[acyl-carrier-protein] dehydratase.